A 385-amino-acid polypeptide reads, in one-letter code: GDSL esterase/lipase 5 (385 aa).

A signal peptide spans 1-35 (MRESTLMEKVTRRTISSFIFFIVSSTILFLAGKSS). Asn45 carries N-linked (GlcNAc...) asparagine glycosylation. Ser55 functions as the Nucleophile in the catalytic mechanism. Residues Asn66, Asn194, Asn211, and Asn289 are each glycosylated (N-linked (GlcNAc...) asparagine). Catalysis depends on residues Asp345 and His348.

It belongs to the 'GDSL' lipolytic enzyme family.

The protein localises to the secreted. This chain is GDSL esterase/lipase 5 (GLIP5), found in Arabidopsis thaliana (Mouse-ear cress).